Here is a 423-residue protein sequence, read N- to C-terminus: Deoxyguanosinetriphosphate triphosphohydrolase-like protein (423 aa).

One can recognise an HD domain in the interval 66 to 216 (RLTHSLEVAQ…MDFSDDIAYS (151 aa)).

The protein belongs to the dGTPase family. Type 2 subfamily.

The protein is Deoxyguanosinetriphosphate triphosphohydrolase-like protein of Corynebacterium diphtheriae (strain ATCC 700971 / NCTC 13129 / Biotype gravis).